Reading from the N-terminus, the 122-residue chain is MIQPQTHLNVADNSGARELMCIRIIGASHRRYAHIGDVIVAVIKDAVPNMPLERSEVVRAVIVRTCKELKRDNGMIIRYDDNAAVVIDQEGNPKGTRVFGAIARELRQFNFTKIVSLAPEVL.

This sequence belongs to the universal ribosomal protein uL14 family. As to quaternary structure, part of the 50S ribosomal subunit.

It is found in the plastid. It localises to the chloroplast. Binds to 23S rRNA. The protein is Large ribosomal subunit protein uL14c of Guizotia abyssinica (Niger).